The sequence spans 237 residues: CD99 antigen-like protein 2 (237 aa).

The first 25 residues, 1-25 (MVARLTAFLVCLVFSLATLVQRGYG), serve as a signal peptide directing secretion. At 26–161 (DTDGFNLEDA…PGSGISTETG (136 aa)) the chain is on the extracellular side. Residues 47–157 (DHFSTTTRRP…SNDDPGSGIS (111 aa)) are disordered. Composition is skewed to low complexity over residues 51–66 (TTTR…ANPA) and 74–84 (TTTTRRPGTTR). Over residues 102–111 (DDRNDLDGPK) the composition is skewed to basic and acidic residues. O-linked (Xyl...) (chondroitin sulfate) serine glycosylation is present at Ser-154. The helical transmembrane segment at 162 to 182 (TIAGVASALAMALIGAVSSYI) threads the bilayer. Topologically, residues 183-237 (SYQQKKFCFSIQQGLNADYVKGENLEAVVCEEPQVTYSKQETQSAEPPPPEPPRI) are cytoplasmic. Residues 218–227 (TYSKQETQSA) show a composition bias toward polar residues. The disordered stretch occupies residues 218-237 (TYSKQETQSAEPPPPEPPRI). A compositionally biased stretch (pro residues) spans 228–237 (EPPPPEPPRI).

It belongs to the CD99 family. Post-translationally, O-glycosylated. As to expression, highly expressed in the nervous system, including brain, dentate nucleus of hippocampus, granular and Purkinje cells of cerebellum, brain stem nucleus and choroid plexus. Expressed in peripheral blood T- and B-cells and neutrophils (at protein level). Almost undetectable in bone marrow-derived neutrophils (at protein level). Also expressed in thymocytes (at protein level) with higher expression in cortical thymocytes than in medullary thymocytes. Expressed at high levels in testis (mostly in germ cells and Sertoli cells) and ovary (mostly in granulosa cells). Expressed in lung, heart, kidney and liver (at protein level); however, expression in heart, kidney and liver seems restricted to endothelial cells (at protein level). Highly expressed in endothelial cells and to a lower level in vascular smooth muscle cells (at protein level). Low expression in spleen.

It is found in the cell membrane. The protein localises to the cell junction. The protein resides in the secreted. Its function is as follows. Plays a role in a late step of leukocyte extravasation helping cells to overcome the endothelial basement membrane. Acts at the same site as, but independently of, PECAM1. Homophilic adhesion molecule, but these interactions may not be required for cell aggregation. This Mus musculus (Mouse) protein is CD99 antigen-like protein 2 (Cd99l2).